The chain runs to 240 residues: Uridylate kinase (240 aa).

ATP-binding positions include 15 to 18 (KISG), Gly-58, and Arg-62. Residues Asp-77 and 138–145 (TGNPLFTT) contribute to the UMP site. ATP is bound by residues Thr-165, Tyr-171, and Asp-174.

Belongs to the UMP kinase family. In terms of assembly, homohexamer.

The protein resides in the cytoplasm. The enzyme catalyses UMP + ATP = UDP + ADP. It participates in pyrimidine metabolism; CTP biosynthesis via de novo pathway; UDP from UMP (UMPK route): step 1/1. Inhibited by UTP. Its function is as follows. Catalyzes the reversible phosphorylation of UMP to UDP. The sequence is that of Uridylate kinase from Buchnera aphidicola subsp. Schizaphis graminum (strain Sg).